The following is a 156-amino-acid chain: ATP synthase subunit b (156 aa).

Residues 7-29 (LLGQAISFAMFVWFCMKYVWPPI) form a helical membrane-spanning segment.

This sequence belongs to the ATPase B chain family. As to quaternary structure, F-type ATPases have 2 components, F(1) - the catalytic core - and F(0) - the membrane proton channel. F(1) has five subunits: alpha(3), beta(3), gamma(1), delta(1), epsilon(1). F(0) has three main subunits: a(1), b(2) and c(10-14). The alpha and beta chains form an alternating ring which encloses part of the gamma chain. F(1) is attached to F(0) by a central stalk formed by the gamma and epsilon chains, while a peripheral stalk is formed by the delta and b chains.

It localises to the cell inner membrane. F(1)F(0) ATP synthase produces ATP from ADP in the presence of a proton or sodium gradient. F-type ATPases consist of two structural domains, F(1) containing the extramembraneous catalytic core and F(0) containing the membrane proton channel, linked together by a central stalk and a peripheral stalk. During catalysis, ATP synthesis in the catalytic domain of F(1) is coupled via a rotary mechanism of the central stalk subunits to proton translocation. In terms of biological role, component of the F(0) channel, it forms part of the peripheral stalk, linking F(1) to F(0). This is ATP synthase subunit b from Vibrio vulnificus (strain CMCP6).